Reading from the N-terminus, the 513-residue chain is Cytochrome P450 monooxygenase asaD (513 aa).

The helical transmembrane segment at 14–34 (ILYPFLFGIFAVASLCIATLL) threads the bilayer. N258, N370, N431, and N441 each carry an N-linked (GlcNAc...) asparagine glycan. C461 contacts heme.

This sequence belongs to the cytochrome P450 family. Heme serves as cofactor.

Its subcellular location is the membrane. Its pathway is secondary metabolite biosynthesis. Cytochrome P450 monooxygenase; part of the gene cluster that mediates the biosynthesis of aspergillic acid, a hydroxamic acid-containing pyrazinone with aliphatic side chains that originates from leucine (Leu) and isoleucine (Ile). Aspergillic acid has antibiotic properties and was shown to be lethal to mice. The first step in the pathway is the production of deoxyaspergillic acid via a condensation between the Ile amine and the Leu carboxylic acid, followed by a reductive release from the protein forming the dipeptide aldehyde NH(2)-Leu-Ile-CHO, which could undergo an intermolecular cyclization resulting in a dihydropyrazinone. As the NRPS asaC lacks a condensation domain, it is improbable that it is responsible for condensation of Leu and Ile. One possibility is that asaC acts on a previously condensed dipeptide and functions as a Leu-Ile reductase to yield deoxyaspergillic acid. After asaC forms deoxyaspergillic acid, the cytochrome P450 asaD oxidizes the pyrazinone to the hydroxamic acid-containing bioactive metabolite aspergillic acid. The hydroxylase/desaturase asaB can then convert aspergillic acid to hydroxyaspergillic acid. Both aspergillic acid and hydroxyaspergillic acid can form complexes with iron producing ferriaspergillin analogs. The protein is Cytochrome P450 monooxygenase asaD of Aspergillus flavus (strain ATCC 200026 / FGSC A1120 / IAM 13836 / NRRL 3357 / JCM 12722 / SRRC 167).